The chain runs to 226 residues: Putative O-methyltransferase Mvan_4497 (226 aa).

Residues Val53, Glu75, 77–78, Ser83, Asp101, and Val102 contribute to the S-adenosyl-L-methionine site; that span reads GT. Substrate is bound at residue Asp149.

This sequence belongs to the class I-like SAM-binding methyltransferase superfamily. Cation-dependent O-methyltransferase family.

The chain is Putative O-methyltransferase Mvan_4497 from Mycolicibacterium vanbaalenii (strain DSM 7251 / JCM 13017 / BCRC 16820 / KCTC 9966 / NRRL B-24157 / PYR-1) (Mycobacterium vanbaalenii).